Consider the following 428-residue polypeptide: Cell division cycle 20.6, cofactor of APC complex (428 aa).

WD repeat units lie at residues tryptophan 106 to leucine 145, aspartate 150 to threonine 189, glycine 193 to glycine 230, glycine 234 to threonine 273, glutamate 282 to serine 324, glutamate 326 to glutamate 367, and glycine 370 to threonine 409.

It belongs to the WD repeat CDC20/Fizzy family. In terms of assembly, the APC/C is composed of at least 11 subunits that stay tightly associated throughout the cell cycle.

The protein localises to the nucleus. It functions in the pathway protein modification; protein ubiquitination. Its function is as follows. Component of the anaphase promoting complex/cyclosome (APC/C), a cell cycle-regulated E3 ubiquitin-protein ligase complex that controls progression through mitosis and the G1 phase of the cell cycle. In Arabidopsis thaliana (Mouse-ear cress), this protein is Cell division cycle 20.6, cofactor of APC complex (CDC20-6).